Reading from the N-terminus, the 328-residue chain is Renalase (328 aa).

Residues alanine 13, 32–33 (DK), arginine 40, and 56–57 (QY) each bind FAD. Residues 57-61 (YFTAR) and 96-98 (SPD) contribute to the substrate site. An FAD-binding site is contributed by isoleucine 128. Residue threonine 185 participates in substrate binding. Position 302 (aspartate 302) interacts with FAD. Residue arginine 308 coordinates substrate. Valine 309 is an FAD binding site.

It belongs to the bacterial renalase family. The cofactor is FAD.

It catalyses the reaction 1,2-dihydro-beta-NAD + O2 + H(+) = H2O2 + NAD(+). It carries out the reaction 1,2-dihydro-beta-NADP + O2 + H(+) = H2O2 + NADP(+). The catalysed reaction is 1,6-dihydro-beta-NADP + O2 + H(+) = H2O2 + NADP(+). The enzyme catalyses 1,6-dihydro-beta-NAD + O2 + H(+) = H2O2 + NAD(+). Catalyzes the oxidation of the 1,2-dihydro- and 1,6-dihydro- isomeric forms of beta-NAD(P) back to beta-NAD(P)+. Has a preference for 1,2-dihydro-beta-NAD as substrate. May serve to protect primary metabolism dehydrogenases from inhibition by the 1,2-dihydro- and 1,6-dihydro-beta-NAD(P) isomers. This chain is Renalase, found in Pseudomonas savastanoi pv. phaseolicola (strain 1448A / Race 6) (Pseudomonas syringae pv. phaseolicola (strain 1448A / Race 6)).